Here is a 316-residue protein sequence, read N- to C-terminus: Mycothiol acetyltransferase (316 aa).

N-acetyltransferase domains lie at Arg16–Val153 and Val156–Asn316. Glu36 contacts 1D-myo-inositol 2-(L-cysteinylamino)-2-deoxy-alpha-D-glucopyranoside. Residues Leu83–Val85 and Arg91–Ser96 each bind acetyl-CoA. 1D-myo-inositol 2-(L-cysteinylamino)-2-deoxy-alpha-D-glucopyranoside contacts are provided by Glu183, Lys228, and Glu238. Acetyl-CoA is bound by residues Val242 to Val244 and Gln249 to Gln255. Tyr283 is a 1D-myo-inositol 2-(L-cysteinylamino)-2-deoxy-alpha-D-glucopyranoside binding site. An acetyl-CoA-binding site is contributed by Asn288–Arg293.

It belongs to the acetyltransferase family. MshD subfamily. As to quaternary structure, monomer.

It carries out the reaction 1D-myo-inositol 2-(L-cysteinylamino)-2-deoxy-alpha-D-glucopyranoside + acetyl-CoA = mycothiol + CoA + H(+). In terms of biological role, catalyzes the transfer of acetyl from acetyl-CoA to desacetylmycothiol (Cys-GlcN-Ins) to form mycothiol. This Mycobacterium avium (strain 104) protein is Mycothiol acetyltransferase.